The sequence spans 157 residues: Endoribonuclease YbeY (157 aa).

Residues His114, His118, and His124 each coordinate Zn(2+).

It belongs to the endoribonuclease YbeY family. Zn(2+) serves as cofactor.

The protein localises to the cytoplasm. In terms of biological role, single strand-specific metallo-endoribonuclease involved in late-stage 70S ribosome quality control and in maturation of the 3' terminus of the 16S rRNA. The chain is Endoribonuclease YbeY from Edwardsiella ictaluri (strain 93-146).